A 367-amino-acid polypeptide reads, in one-letter code: Phosphoribosylaminoimidazole-succinocarboxamide synthase (367 aa).

This sequence belongs to the SAICAR synthetase family.

It carries out the reaction 5-amino-1-(5-phospho-D-ribosyl)imidazole-4-carboxylate + L-aspartate + ATP = (2S)-2-[5-amino-1-(5-phospho-beta-D-ribosyl)imidazole-4-carboxamido]succinate + ADP + phosphate + 2 H(+). The protein operates within purine metabolism; IMP biosynthesis via de novo pathway; 5-amino-1-(5-phospho-D-ribosyl)imidazole-4-carboxamide from 5-amino-1-(5-phospho-D-ribosyl)imidazole-4-carboxylate: step 1/2. This Aliivibrio fischeri (strain ATCC 700601 / ES114) (Vibrio fischeri) protein is Phosphoribosylaminoimidazole-succinocarboxamide synthase.